The chain runs to 180 residues: Hypoxanthine-guanine phosphoribosyltransferase (180 aa).

Residues K43 and G44 each coordinate diphosphate. Mg(2+) is bound by residues E99 and D100. The Proton acceptor role is filled by D103. GMP contacts are provided by residues K131, 152–153 (FV), and D159. Position 165 (R165) interacts with diphosphate.

This sequence belongs to the purine/pyrimidine phosphoribosyltransferase family. Mg(2+) serves as cofactor.

It is found in the cytoplasm. The enzyme catalyses IMP + diphosphate = hypoxanthine + 5-phospho-alpha-D-ribose 1-diphosphate. The catalysed reaction is GMP + diphosphate = guanine + 5-phospho-alpha-D-ribose 1-diphosphate. It functions in the pathway purine metabolism; IMP biosynthesis via salvage pathway; IMP from hypoxanthine: step 1/1. The protein operates within purine metabolism; GMP biosynthesis via salvage pathway; GMP from guanine: step 1/1. Functionally, purine salvage pathway enzyme that catalyzes the transfer of the ribosyl-5-phosphate group from 5-phospho-alpha-D-ribose 1-diphosphate (PRPP) to the N9 position of the 6-oxopurines hypoxanthine and guanine to form the corresponding ribonucleotides IMP (inosine 5'-monophosphate) and GMP (guanosine 5'-monophosphate), with the release of PPi. The polypeptide is Hypoxanthine-guanine phosphoribosyltransferase (hprT) (Bacillus subtilis (strain 168)).